A 233-amino-acid polypeptide reads, in one-letter code: Lipoprotein-releasing system ATP-binding protein LolD (233 aa).

Residues 7 to 233 (IHCEKLSKTY…QLQSESERNH (227 aa)) enclose the ABC transporter domain. 43-50 (GASGAGKS) provides a ligand contact to ATP.

The protein belongs to the ABC transporter superfamily. Lipoprotein translocase (TC 3.A.1.125) family. In terms of assembly, the complex is composed of two ATP-binding proteins (LolD) and two transmembrane proteins (LolC and LolE).

The protein localises to the cell inner membrane. Functionally, part of the ABC transporter complex LolCDE involved in the translocation of mature outer membrane-directed lipoproteins, from the inner membrane to the periplasmic chaperone, LolA. Responsible for the formation of the LolA-lipoprotein complex in an ATP-dependent manner. The polypeptide is Lipoprotein-releasing system ATP-binding protein LolD (Coxiella burnetii (strain RSA 493 / Nine Mile phase I)).